The chain runs to 48 residues: Protein TUNAR (48 aa).

Residues 1-20 (MVITSENDEDRGGQEKESKE) form a disordered region. Over residues 10 to 20 (DRGGQEKESKE) the composition is skewed to basic and acidic residues. A helical membrane pass occupies residues 24 to 44 (LAMLGIIGTILNLIVIIFVYI).

Interacts with ATPase ATP2A2/SERCA2. Interacts with ATPase ATP2A3/SERCA3; the interaction occurs at low levels in low glucose conditions and is increased by high glucose levels. As to expression, highly expressed in pancreatic islets where it is enriched in the insulin-producing beta cells.

The protein resides in the endoplasmic reticulum membrane. Its subcellular location is the extracellular vesicle membrane. Functionally, in neurons, plays a role in the regulation of intracellular Ca(2+), possibly by acting as an activator of ATP2A2/SERCA2, thus increasing the efficiency with which Ca(2+) is removed from the cytoplasm. Inhibits differentiation of embryonic stem cells into neurons and inhibits neurite outgrowth, likely as a result of its role in intracellular Ca(2+) regulation. In pancreatic beta cells, lowers Ca(2+) levels in the endoplasmic reticulum and enhances glucose-stimulated insulin secretion. This chain is Protein TUNAR, found in Homo sapiens (Human).